A 468-amino-acid chain; its full sequence is Glutamate--tRNA ligase (468 aa).

Residues 12–22 (PSPTGFIHLGN) carry the 'HIGH' region motif. A 'KMSKS' region motif is present at residues 244–248 (KMSKR). Lys-247 is a binding site for ATP.

Belongs to the class-I aminoacyl-tRNA synthetase family. Glutamate--tRNA ligase type 1 subfamily. As to quaternary structure, monomer.

The protein resides in the cytoplasm. The enzyme catalyses tRNA(Glu) + L-glutamate + ATP = L-glutamyl-tRNA(Glu) + AMP + diphosphate. In terms of biological role, catalyzes the attachment of glutamate to tRNA(Glu) in a two-step reaction: glutamate is first activated by ATP to form Glu-AMP and then transferred to the acceptor end of tRNA(Glu). The sequence is that of Glutamate--tRNA ligase from Polynucleobacter necessarius subsp. necessarius (strain STIR1).